A 211-amino-acid chain; its full sequence is Large ribosomal subunit protein uL4 (211 aa).

Positions 44-94 (RSGNHATKTRSEVRGGGKKPWSQKGTGHARQGSTRAPHWVGGGTVHGPQKR) are disordered.

This sequence belongs to the universal ribosomal protein uL4 family. As to quaternary structure, part of the 50S ribosomal subunit.

Functionally, one of the primary rRNA binding proteins, this protein initially binds near the 5'-end of the 23S rRNA. It is important during the early stages of 50S assembly. It makes multiple contacts with different domains of the 23S rRNA in the assembled 50S subunit and ribosome. In terms of biological role, forms part of the polypeptide exit tunnel. This is Large ribosomal subunit protein uL4 from Leptospira borgpetersenii serovar Hardjo-bovis (strain JB197).